The chain runs to 501 residues: Isoflavone 3'-hydroxylase (501 aa).

The helical transmembrane segment at 7-24 (LLSLSFIITIKILLKITS) threads the bilayer. Cys-439 is a heme binding site.

This sequence belongs to the cytochrome P450 family. The cofactor is heme. As to expression, expressed constitutively in leaves and stems, but not in roots.

The protein resides in the endoplasmic reticulum membrane. It catalyses the reaction formononetin + reduced [NADPH--hemoprotein reductase] + O2 = calycosin + oxidized [NADPH--hemoprotein reductase] + H2O + H(+). Involved in the biosynthesis of the pterocarpin phytoalexins. Acts on isoflavones with a 4'-methoxy group on the B-ring, such as biochanin A, formononetin and 2'-hydroxyformononetin. Has a low activity with daidzein and pseudobaptigenin, and no activity with the 7-O-methylated isoflavonoids isoformononetin and prunetin. In Medicago truncatula (Barrel medic), this protein is Isoflavone 3'-hydroxylase.